A 179-amino-acid chain; its full sequence is Large ribosomal subunit protein uL5 (179 aa).

This sequence belongs to the universal ribosomal protein uL5 family. In terms of assembly, part of the 50S ribosomal subunit; part of the 5S rRNA/L5/L18/L25 subcomplex. Contacts the 5S rRNA and the P site tRNA. Forms a bridge to the 30S subunit in the 70S ribosome.

Functionally, this is one of the proteins that bind and probably mediate the attachment of the 5S RNA into the large ribosomal subunit, where it forms part of the central protuberance. In the 70S ribosome it contacts protein S13 of the 30S subunit (bridge B1b), connecting the 2 subunits; this bridge is implicated in subunit movement. Contacts the P site tRNA; the 5S rRNA and some of its associated proteins might help stabilize positioning of ribosome-bound tRNAs. This chain is Large ribosomal subunit protein uL5, found in Serratia proteamaculans (strain 568).